Here is a 132-residue protein sequence, read N- to C-terminus: Ribosome-binding factor A (132 aa).

This sequence belongs to the RbfA family. In terms of assembly, monomer. Binds 30S ribosomal subunits, but not 50S ribosomal subunits or 70S ribosomes.

The protein resides in the cytoplasm. Its function is as follows. One of several proteins that assist in the late maturation steps of the functional core of the 30S ribosomal subunit. Associates with free 30S ribosomal subunits (but not with 30S subunits that are part of 70S ribosomes or polysomes). Required for efficient processing of 16S rRNA. May interact with the 5'-terminal helix region of 16S rRNA. The protein is Ribosome-binding factor A of Burkholderia lata (strain ATCC 17760 / DSM 23089 / LMG 22485 / NCIMB 9086 / R18194 / 383).